Consider the following 240-residue polypeptide: 4-hydroxy-tetrahydrodipicolinate reductase (240 aa).

Residues 79 to 81 and 103 to 106 contribute to the NAD(+) site; these read ATT and SANM. His-135 (proton donor/acceptor) is an active-site residue. Position 136 (His-136) interacts with (S)-2,3,4,5-tetrahydrodipicolinate. Lys-139 functions as the Proton donor in the catalytic mechanism. 145–146 is a (S)-2,3,4,5-tetrahydrodipicolinate binding site; it reads GT.

Belongs to the DapB family.

It is found in the cytoplasm. It catalyses the reaction (S)-2,3,4,5-tetrahydrodipicolinate + NAD(+) + H2O = (2S,4S)-4-hydroxy-2,3,4,5-tetrahydrodipicolinate + NADH + H(+). The enzyme catalyses (S)-2,3,4,5-tetrahydrodipicolinate + NADP(+) + H2O = (2S,4S)-4-hydroxy-2,3,4,5-tetrahydrodipicolinate + NADPH + H(+). The protein operates within amino-acid biosynthesis; L-lysine biosynthesis via DAP pathway; (S)-tetrahydrodipicolinate from L-aspartate: step 4/4. In terms of biological role, catalyzes the conversion of 4-hydroxy-tetrahydrodipicolinate (HTPA) to tetrahydrodipicolinate. In Staphylococcus aureus (strain USA300), this protein is 4-hydroxy-tetrahydrodipicolinate reductase.